The following is a 358-amino-acid chain: MEKDLSREAYYYHLPEENIAQKPADKRDHSKLMVLNTSTGKVEHKIFNNVLEYINPGDMLIVNNTKVFPARLTGHKESGGKVEVFLLELPTYIRPGVSESIALIKSSRKPKVGSTLTINEALSCRVTEQLAGGKARLQLHYDKDVDVTEILAGIGEIPLPPYIKREEGTTPEDVTRYQTVYANVPGAVAAPTAGLHFTEELLQSLRENGIQFGEVTLHVGYGTFAPVRAENIVEHNIHEEFVSVGQETVDKIIATRKAGGKIWAVGTTTVRSLEFAAAQHGGQIAATEGWCALYIYPGFKFQVIDNLITNFHLPDSSLMFLVSALCRREKLLECYQMAIKEDYRFFSYGDAMAVISGE.

The protein belongs to the QueA family. Monomer.

It is found in the cytoplasm. It catalyses the reaction 7-aminomethyl-7-carbaguanosine(34) in tRNA + S-adenosyl-L-methionine = epoxyqueuosine(34) in tRNA + adenine + L-methionine + 2 H(+). Its pathway is tRNA modification; tRNA-queuosine biosynthesis. Functionally, transfers and isomerizes the ribose moiety from AdoMet to the 7-aminomethyl group of 7-deazaguanine (preQ1-tRNA) to give epoxyqueuosine (oQ-tRNA). This is S-adenosylmethionine:tRNA ribosyltransferase-isomerase from Desulfotalea psychrophila (strain LSv54 / DSM 12343).